The following is a 283-amino-acid chain: NADPH-dependent 7-cyano-7-deazaguanine reductase (283 aa).

89–91 (IES) lines the substrate pocket. 91–92 (SK) is a binding site for NADPH. Residue Cys190 is the Thioimide intermediate of the active site. The Proton donor role is filled by Asp197. Substrate is bound at residue 229–230 (HE). 258 to 259 (RG) is a binding site for NADPH.

The protein belongs to the GTP cyclohydrolase I family. QueF type 2 subfamily. In terms of assembly, homodimer.

The protein localises to the cytoplasm. The catalysed reaction is 7-aminomethyl-7-carbaguanine + 2 NADP(+) = 7-cyano-7-deazaguanine + 2 NADPH + 3 H(+). It participates in tRNA modification; tRNA-queuosine biosynthesis. Functionally, catalyzes the NADPH-dependent reduction of 7-cyano-7-deazaguanine (preQ0) to 7-aminomethyl-7-deazaguanine (preQ1). The protein is NADPH-dependent 7-cyano-7-deazaguanine reductase of Aromatoleum aromaticum (strain DSM 19018 / LMG 30748 / EbN1) (Azoarcus sp. (strain EbN1)).